A 262-amino-acid chain; its full sequence is GTP cyclohydrolase FolE2 (262 aa).

The protein belongs to the GTP cyclohydrolase IV family.

The catalysed reaction is GTP + H2O = 7,8-dihydroneopterin 3'-triphosphate + formate + H(+). Its pathway is cofactor biosynthesis; 7,8-dihydroneopterin triphosphate biosynthesis; 7,8-dihydroneopterin triphosphate from GTP: step 1/1. Converts GTP to 7,8-dihydroneopterin triphosphate. In Dichelobacter nodosus (strain VCS1703A), this protein is GTP cyclohydrolase FolE2.